A 718-amino-acid chain; its full sequence is MSNEGKCPVMHGGATSATQADNHWWPKALNLDILHQHDSKTNPMAPGFNYREALKGLDVEALKQDLKALMTDSQAWWPADWGHYGGLMIRMAWHSAGTYRIADGRGGGGHGAQRFAPLNSWPDNGNLDKARRLLWPIKQKYGNKVSWADLMILAGNMAYESMGLKTFGFAFGREDIWHPEKDTYWGAEKEWLAPSGGANSRYSGVRDLQNPLAAVMMGLIYVNPEGVDGNPDPLKTAQDMRVTFARMAMNDEETVALTAGGHTVGKAHGNGNAANLGPEPEAAPLEEQGFGWMNHQSRGIGRNTVTSGIEGAWTTHPTRWDNGYFHLLFSYDWALTKSPAGAWQWEPVNIREEDKPVDVEDPNIRSNPMMTDADMALKMDPDYRRIAERFFHDPDYFADTFARAWFKLTHRDMGPKSRYFGPDVPAEDLIWQDPVPKGNSQYDPEAVKARIAGTGLGAAELVATAWDSARTYRNSDKRGGANGARIRLLPQKDWVANEPARLARVLELLTPIASDMGVSIADTLVLGGNLGVELAAKAAGFNIKVPFIPGRGDASQAQTDIDSFEVLEPLADGFRNWQKQDFVVTPEEMLLDRAQLMGLSAPEMTVLIGGMRAMAVNHGGTTHGVLTDNPGSLSNDFFVNLTDMSYRWKPVANNLYEICDRASGQKKWTATRVDLVFGSNSVLRAYAEYYAQDDNKETFVKDFVTAWCKVMNADRFDA.

A cross-link (tryptophyl-tyrosyl-methioninium (Trp-Tyr) (with M-247)) is located at residues 93–221; sequence WHSAGTYRIA…LAAVMMGLIY (129 aa). H94 serves as the catalytic Proton acceptor. Residues 221-247 constitute a cross-link (tryptophyl-tyrosyl-methioninium (Tyr-Met) (with W-93)); it reads YVNPEGVDGNPDPLKTAQDMRVTFARM. A heme b-binding site is contributed by H262.

The protein belongs to the peroxidase family. Peroxidase/catalase subfamily. As to quaternary structure, homodimer or homotetramer. Requires heme b as cofactor. Post-translationally, formation of the three residue Trp-Tyr-Met cross-link is important for the catalase, but not the peroxidase activity of the enzyme.

It catalyses the reaction H2O2 + AH2 = A + 2 H2O. The catalysed reaction is 2 H2O2 = O2 + 2 H2O. Functionally, bifunctional enzyme with both catalase and broad-spectrum peroxidase activity. The chain is Catalase-peroxidase 1 from Shewanella amazonensis (strain ATCC BAA-1098 / SB2B).